Here is a 353-residue protein sequence, read N- to C-terminus: Green-sensitive opsin-2 (353 aa).

Topologically, residues 1-47 are extracellular; the sequence is MAAHEPVFAARRHNEDTTRESAFVYTNANNTRDPFEGPNYHIAPRWV. Asn29 carries N-linked (GlcNAc...) asparagine glycosylation. The chain crosses the membrane as a helical span at residues 48–72; sequence YNVSSLWMIFVVIASVFTNGLVIVA. The Cytoplasmic segment spans residues 73-84; it reads TAKFKKLRHPLN. A helical membrane pass occupies residues 85–110; it reads WILVNLAIADLGETVLASTISVINQI. Topologically, residues 111–124 are extracellular; it reads FGYFILGHPMCVFE. A disulfide bridge links Cys121 with Cys198. Residues 125 to 144 form a helical membrane-spanning segment; that stretch reads GWTVSVCGITALWSLTIISW. Residues 145–163 are Cytoplasmic-facing; it reads ERWVVVCKPFGNVKFDGKW. A helical transmembrane segment spans residues 164–187; it reads AAGGIIFSWVWAIIWCTPPIFGWS. Topologically, residues 188 to 213 are extracellular; the sequence is RYWPHGLKTSCGPDVFSGSEDPGVAS. A helical transmembrane segment spans residues 214–241; the sequence is YMITLMLTCCILPLSIIIICYIFVWSAI. The Cytoplasmic segment spans residues 242–263; that stretch reads HQVAQQQKDSESTQKAEKEVSR. Residues 264–287 traverse the membrane as a helical segment; it reads MVVVMILAFIVCWGPYASFATFSA. At 288–295 the chain is on the extracellular side; it reads VNPGYAWH. A helical transmembrane segment spans residues 296 to 320; sequence PLAAAMPAYFAKSATIYNPIIYVFM. N6-(retinylidene)lysine is present on Lys307. Topologically, residues 321–353 are cytoplasmic; it reads NRQFRSCIMQLFGKKVEDASEVSGSTTEVSTAS.

This sequence belongs to the G-protein coupled receptor 1 family. Opsin subfamily. The color pigments are found in the cone photoreceptor cells.

It localises to the membrane. Its function is as follows. Visual pigments are the light-absorbing molecules that mediate vision. They consist of an apoprotein, opsin, covalently linked to cis-retinal. This is Green-sensitive opsin-2 (G101) from Psalidodon fasciatus (Banded astyanax).